The sequence spans 141 residues: Hemoglobin subunit alpha-3 (141 aa).

An N-acetylserine modification is found at S1. A Globin domain is found at 1-141 (SLSASEKAAV…VSAVLTSKYR (141 aa)). H58 contributes to the O2 binding site. H87 serves as a coordination point for heme b.

This sequence belongs to the globin family. As to quaternary structure, heterotetramer of two alpha chains and two beta chains. In terms of tissue distribution, red blood cells.

Functionally, this is a tadpole (larval) alpha chain. In Aquarana catesbeiana (American bullfrog), this protein is Hemoglobin subunit alpha-3.